The sequence spans 362 residues: Shewanella-like protein phosphatase 1 (362 aa).

The signal sequence occupies residues 1-23; that stretch reads MIFKKALYILLFLYIAIVKKGES. The Mn(2+) site is built by Asp-65, His-67, Asp-101, and Asn-136. The Proton donor role is filled by His-137. His-196 is a Mn(2+) binding site.

The protein belongs to the metallophosphoesterase superfamily. SLP family. Mn(2+) serves as cofactor.

Functionally, phosphatase which plays an essential role in the development and differentiation of the ookinete and in the formation of ookinete micronemes. The polypeptide is Shewanella-like protein phosphatase 1 (Plasmodium berghei (strain Anka)).